Reading from the N-terminus, the 307-residue chain is tRNA dimethylallyltransferase (307 aa).

Gly9 to Ser16 is an ATP binding site. Residue Thr11–Ser16 participates in substrate binding.

It belongs to the IPP transferase family. In terms of assembly, monomer. Requires Mg(2+) as cofactor.

The enzyme catalyses adenosine(37) in tRNA + dimethylallyl diphosphate = N(6)-dimethylallyladenosine(37) in tRNA + diphosphate. In terms of biological role, catalyzes the transfer of a dimethylallyl group onto the adenine at position 37 in tRNAs that read codons beginning with uridine, leading to the formation of N6-(dimethylallyl)adenosine (i(6)A). The protein is tRNA dimethylallyltransferase of Clavibacter sepedonicus (Clavibacter michiganensis subsp. sepedonicus).